A 496-amino-acid chain; its full sequence is Chromosomal replication initiator protein DnaA (496 aa).

The tract at residues methionine 1–glutamine 76 is domain I, interacts with DnaA modulators. The domain II stretch occupies residues glutamine 76–serine 150. Residues proline 151 to glutamine 373 form a domain III, AAA+ region region. 4 residues coordinate ATP: glycine 197, glycine 199, lysine 200, and threonine 201. The segment at serine 374–alanine 496 is domain IV, binds dsDNA.

The protein belongs to the DnaA family. Oligomerizes as a right-handed, spiral filament on DNA at oriC.

The protein resides in the cytoplasm. Plays an essential role in the initiation and regulation of chromosomal replication. ATP-DnaA binds to the origin of replication (oriC) to initiate formation of the DNA replication initiation complex once per cell cycle. Binds the DnaA box (a 9 base pair repeat at the origin) and separates the double-stranded (ds)DNA. Forms a right-handed helical filament on oriC DNA; dsDNA binds to the exterior of the filament while single-stranded (ss)DNA is stabiized in the filament's interior. The ATP-DnaA-oriC complex binds and stabilizes one strand of the AT-rich DNA unwinding element (DUE), permitting loading of DNA polymerase. After initiation quickly degrades to an ADP-DnaA complex that is not apt for DNA replication. Binds acidic phospholipids. The chain is Chromosomal replication initiator protein DnaA from Brucella abortus biovar 1 (strain 9-941).